A 268-amino-acid polypeptide reads, in one-letter code: 4-hydroxy-tetrahydrodipicolinate reductase (268 aa).

NAD(+)-binding positions include 10 to 15 (GSTGRM), Glu-36, 99 to 101 (GTT), and 123 to 126 (APNM). The active-site Proton donor/acceptor is the His-156. His-157 lines the (S)-2,3,4,5-tetrahydrodipicolinate pocket. Residue Lys-160 is the Proton donor of the active site. 166–167 (GT) provides a ligand contact to (S)-2,3,4,5-tetrahydrodipicolinate.

The protein belongs to the DapB family.

It localises to the cytoplasm. It carries out the reaction (S)-2,3,4,5-tetrahydrodipicolinate + NAD(+) + H2O = (2S,4S)-4-hydroxy-2,3,4,5-tetrahydrodipicolinate + NADH + H(+). The catalysed reaction is (S)-2,3,4,5-tetrahydrodipicolinate + NADP(+) + H2O = (2S,4S)-4-hydroxy-2,3,4,5-tetrahydrodipicolinate + NADPH + H(+). The protein operates within amino-acid biosynthesis; L-lysine biosynthesis via DAP pathway; (S)-tetrahydrodipicolinate from L-aspartate: step 4/4. Functionally, catalyzes the conversion of 4-hydroxy-tetrahydrodipicolinate (HTPA) to tetrahydrodipicolinate. This is 4-hydroxy-tetrahydrodipicolinate reductase from Nitrosomonas europaea (strain ATCC 19718 / CIP 103999 / KCTC 2705 / NBRC 14298).